The sequence spans 162 residues: Cytochrome c-type biogenesis protein CcmE (162 aa).

Topologically, residues 1–8 (MNPRRKKR) are cytoplasmic. Residues 9 to 29 (LALVVGLIGGVAAVASLLLYA) traverse the membrane as a helical; Signal-anchor for type II membrane protein segment. Residues 30-162 (LNTNLNLFYT…YTETQKGGSR (133 aa)) are Periplasmic-facing. 2 residues coordinate heme: H131 and Y135.

This sequence belongs to the CcmE/CycJ family.

The protein localises to the cell inner membrane. Functionally, heme chaperone required for the biogenesis of c-type cytochromes. Transiently binds heme delivered by CcmC and transfers the heme to apo-cytochromes in a process facilitated by CcmF and CcmH. The polypeptide is Cytochrome c-type biogenesis protein CcmE (Shewanella amazonensis (strain ATCC BAA-1098 / SB2B)).